The following is a 166-amino-acid chain: Interferon gamma (166 aa).

Residues 1-23 form the signal peptide; sequence MKYTSYFLALLLCVLLGFSGSYG. Q24 is modified (pyrrolidone carboxylic acid). Residues N39 and N106 are each glycosylated (N-linked (GlcNAc...) asparagine).

Belongs to the type II (or gamma) interferon family. Homodimer. Interacts with IFNGR1 (via extracellular domain); this interaction promotes IFNGR1 dimerization. As to expression, released primarily from activated T lymphocytes.

It is found in the secreted. In terms of biological role, type II interferon produced by immune cells such as T-cells and NK cells that plays crucial roles in antimicrobial, antiviral, and antitumor responses by activating effector immune cells and enhancing antigen presentation. Primarily signals through the JAK-STAT pathway after interaction with its receptor IFNGR1 to affect gene regulation. Upon IFNG binding, IFNGR1 intracellular domain opens out to allow association of downstream signaling components JAK2, JAK1 and STAT1, leading to STAT1 activation, nuclear translocation and transcription of IFNG-regulated genes. Many of the induced genes are transcription factors such as IRF1 that are able to further drive regulation of a next wave of transcription. Plays a role in class I antigen presentation pathway by inducing a replacement of catalytic proteasome subunits with immunoproteasome subunits. In turn, increases the quantity, quality, and repertoire of peptides for class I MHC loading. Increases the efficiency of peptide generation also by inducing the expression of activator PA28 that associates with the proteasome and alters its proteolytic cleavage preference. Up-regulates as well MHC II complexes on the cell surface by promoting expression of several key molecules such as cathepsins B/CTSB, H/CTSH, and L/CTSL. Participates in the regulation of hematopoietic stem cells during development and under homeostatic conditions by affecting their development, quiescence, and differentiation. This chain is Interferon gamma (IFNG), found in Bubalus bubalis (Domestic water buffalo).